Reading from the N-terminus, the 249-residue chain is Cilia- and flagella-associated protein 410 (249 aa).

LRR repeat units lie at residues 19 to 40 (NVRK…REMP), 41 to 62 (SLEV…RSCR), and 63 to 84 (RLSE…FYLK). The LRRCT domain occupies 97–137 (NPCCGTSPHLYRMTVLRNLPHLQKLDNQAVTEEELTRALME). The tract at residues 146–203 (HREGAGNGCPKPPYALNSVSSATETSQHLLSYTEETEVQGQTTTDQSPSFSPRDTMRS) is disordered. The span at 162–175 (NSVSSATETSQHLL) shows a compositional bias: polar residues.

In terms of assembly, found in a complex with CFAP410, NEK1 and SPATA7. Interacts with NEK1. As to expression, expressed in the retina.

The protein resides in the cell projection. It localises to the cilium. It is found in the cytoplasm. The protein localises to the cytoskeleton. Its subcellular location is the cilium basal body. The protein resides in the mitochondrion. It localises to the photoreceptor outer segment. Functionally, plays a role in cilia formation and/or maintenance. Plays a role in the regulation of cell morphology and cytoskeletal organization. Involved in DNA damage repair. The protein is Cilia- and flagella-associated protein 410 of Mus musculus (Mouse).